Reading from the N-terminus, the 516-residue chain is MRSVTKYYLHGVVLFATGCAGNPDAKRLYDDLLSNYNKLVRPVLNVSDALTVRIKLKLSQLIDVNLKNQIMTTNLWVEQSWYDYKLSWEPREYGGVEMLHVPSDHIWRPDIVLYNNADGNFEVTLATKATLNYTGRVEWRPPAIYKSSCEIDVEYFPFDQQTCVMKFGSWTYDGFQVDLRHIDEVRGTNVVELGVDLSEFYTSVEWDILEVPAVRNEKFYTCCDEPYLDITFNITMRRKTLFYTVNLIIPCMGISFLTVLVFYLPSDSGEKVSLSISILLSLTVFFLLLAEIIPPTSLVVPLLGKFVLFTMILDTFSICVTVVVLNVHFRSPQTHTMSPWVRRVFIHVLPRLLVMRRPHYRLDPHRSRFAGLVTGAGETTLWDEGSPGVPAPPRPPPCAPPLAPCAACAPAEAPALCDALRRWHRCPELHKAIDGINYIADQTRKEEESTRVKEDWKYVAMVLDRPFLWIFTLAVVVGSAGIILQAPTLYDERAPIDVRLSEIAYTAAKPRPPPPR.

Residues 1–21 (MRSVTKYYLHGVVLFATGCAG) form the signal peptide. Residues 22 to 243 (NPDAKRLYDD…ITMRRKTLFY (222 aa)) are Extracellular-facing. Residues Asn45 and Asn132 are each glycosylated (N-linked (GlcNAc...) asparagine). 2 disulfides stabilise this stretch: Cys149-Cys163 and Cys222-Cys223. A glycan (N-linked (GlcNAc...) asparagine) is linked at Asn233. 3 helical membrane passes run 244 to 264 (TVNL…VFYL), 274 to 294 (LSIS…EIIP), and 306 to 326 (FVLF…VVLN). Over 327-465 (VHFRSPQTHT…WKYVAMVLDR (139 aa)) the chain is Cytoplasmic. Residues 466–486 (PFLWIFTLAVVVGSAGIILQA) form a helical membrane-spanning segment.

It belongs to the ligand-gated ion channel (TC 1.A.9) family. Acetylcholine receptor (TC 1.A.9.1) subfamily.

It is found in the postsynaptic cell membrane. The protein localises to the cell membrane. After binding acetylcholine, the AChR responds by an extensive change in conformation that affects all subunits and leads to opening of an ion-conducting channel across the plasma membrane. In Manduca sexta (Tobacco hawkmoth), this protein is Acetylcholine receptor subunit alpha-like (ARA1).